The primary structure comprises 313 residues: Ribosomal RNA small subunit methyltransferase H (313 aa).

S-adenosyl-L-methionine contacts are provided by residues 35-37 (GGH), Asp-55, Phe-79, Asp-100, and Gln-107.

The protein belongs to the methyltransferase superfamily. RsmH family.

The protein localises to the cytoplasm. The enzyme catalyses cytidine(1402) in 16S rRNA + S-adenosyl-L-methionine = N(4)-methylcytidine(1402) in 16S rRNA + S-adenosyl-L-homocysteine + H(+). In terms of biological role, specifically methylates the N4 position of cytidine in position 1402 (C1402) of 16S rRNA. This chain is Ribosomal RNA small subunit methyltransferase H, found in Burkholderia multivorans (strain ATCC 17616 / 249).